A 568-amino-acid chain; its full sequence is Proline--tRNA ligase (568 aa).

It belongs to the class-II aminoacyl-tRNA synthetase family. ProS type 1 subfamily. In terms of assembly, homodimer.

It is found in the cytoplasm. The catalysed reaction is tRNA(Pro) + L-proline + ATP = L-prolyl-tRNA(Pro) + AMP + diphosphate. Its function is as follows. Catalyzes the attachment of proline to tRNA(Pro) in a two-step reaction: proline is first activated by ATP to form Pro-AMP and then transferred to the acceptor end of tRNA(Pro). As ProRS can inadvertently accommodate and process non-cognate amino acids such as alanine and cysteine, to avoid such errors it has two additional distinct editing activities against alanine. One activity is designated as 'pretransfer' editing and involves the tRNA(Pro)-independent hydrolysis of activated Ala-AMP. The other activity is designated 'posttransfer' editing and involves deacylation of mischarged Ala-tRNA(Pro). The misacylated Cys-tRNA(Pro) is not edited by ProRS. The chain is Proline--tRNA ligase from Listeria monocytogenes serotype 4b (strain F2365).